The chain runs to 88 residues: EMBRYO SURROUNDING FACTOR 1-like protein 11 (88 aa).

The signal sequence occupies residues 1-23 (MISSSHFAIFCIILVSLFALQQY). 4 disulfides stabilise this stretch: C44–C59, C49–C78, C57–C74, and C60–C67.

Belongs to the MEG family. In terms of tissue distribution, expressed in stems.

This chain is EMBRYO SURROUNDING FACTOR 1-like protein 11 (ESFL11), found in Arabidopsis thaliana (Mouse-ear cress).